The primary structure comprises 336 residues: Fructose-1,6-bisphosphatase class 1 (336 aa).

4 residues coordinate Mg(2+): Glu92, Asp115, Leu117, and Asp118. Substrate contacts are provided by residues 118-121, Asn211, Tyr244, 262-264, and Lys274; these read DGSS and YLY. Mg(2+) is bound at residue Glu280.

This sequence belongs to the FBPase class 1 family. Homotetramer. The cofactor is Mg(2+).

Its subcellular location is the cytoplasm. The enzyme catalyses beta-D-fructose 1,6-bisphosphate + H2O = beta-D-fructose 6-phosphate + phosphate. Its pathway is carbohydrate biosynthesis; gluconeogenesis. The protein is Fructose-1,6-bisphosphatase class 1 of Aliivibrio fischeri (strain MJ11) (Vibrio fischeri).